The chain runs to 625 residues: Thioredoxin domain-containing protein 6 (625 aa).

Positions 158–302 (KSYTVAIIKP…FFFPNFKISN (145 aa)) are NDK. A disordered region spans residues 594–625 (GETPETSASDISRNAAAQGDDPEQDESKEMEE). Acidic residues predominate over residues 613-625 (DDPEQDESKEMEE).

The protein belongs to the NDK family. Monomer and homodimer.

The protein localises to the cytoplasm. It localises to the cytoskeleton. Its subcellular location is the cilium axoneme. It is found in the dynein axonemal particle. In terms of biological role, may be a regulator of microtubule physiology. The sequence is that of Thioredoxin domain-containing protein 6 from Xenopus laevis (African clawed frog).